Reading from the N-terminus, the 396-residue chain is S-adenosylmethionine synthase (396 aa).

An ATP-binding site is contributed by H16. Residue D18 participates in Mg(2+) binding. E44 is a binding site for K(+). Positions 57 and 100 each coordinate L-methionine. Residues 100-110 (QSPDINQGVDR) form a flexible loop region. Residues 165-167 (DAK), D240, 246-247 (RK), A263, and K267 contribute to the ATP site. Position 240 (D240) interacts with L-methionine. K271 serves as a coordination point for L-methionine.

The protein belongs to the AdoMet synthase family. As to quaternary structure, homotetramer; dimer of dimers. Requires Mg(2+) as cofactor. K(+) is required as a cofactor.

The protein localises to the cytoplasm. It catalyses the reaction L-methionine + ATP + H2O = S-adenosyl-L-methionine + phosphate + diphosphate. It participates in amino-acid biosynthesis; S-adenosyl-L-methionine biosynthesis; S-adenosyl-L-methionine from L-methionine: step 1/1. Catalyzes the formation of S-adenosylmethionine (AdoMet) from methionine and ATP. The overall synthetic reaction is composed of two sequential steps, AdoMet formation and the subsequent tripolyphosphate hydrolysis which occurs prior to release of AdoMet from the enzyme. This Pseudomonas fluorescens (strain Pf0-1) protein is S-adenosylmethionine synthase.